The following is a 359-amino-acid chain: 4-galactosyl-N-acetylglucosaminide 3-alpha-L-fucosyltransferase 9 (359 aa).

At 1 to 11 the chain is on the cytoplasmic side; sequence MTSTSKGILRP. Residues 12 to 32 traverse the membrane as a helical; Signal-anchor for type II membrane protein segment; the sequence is FLIVCIILGCFMACLLIYIKP. Residues 33-359 lie on the Lumenal side of the membrane; sequence TNSWVFSPME…VGNLEKWFWN (327 aa). The N-linked (GlcNAc...) asparagine glycan is linked to Asn62. The interval 63-168 is acceptor-binding; sequence ETTILVWVWP…RRDSDIQVPY (106 aa). Gln75 contacts a beta-D-galactosyl-(1-&gt;4)-N-acetyl-beta-D-glucosaminyl derivative. Intrachain disulfides connect Cys82-Cys335, Cys91-Cys338, and Cys190-Cys238. N-linked (GlcNAc...) asparagine glycosylation is present at Asn101. Glu137 lines the a beta-D-galactosyl-(1-&gt;4)-N-acetyl-beta-D-glucosaminyl derivative pocket. Glu137 (nucleophile) is an active-site residue. Position 137 (Glu137) interacts with GDP-beta-L-fucose. Residue Asn153 is glycosylated (N-linked (GlcNAc...) asparagine). Residues Tyr168, Val192, Ser194, Asn195, Arg202, Val226, Tyr241, Asn246, Tyr252, Glu255, and Lys256 each coordinate GDP-beta-L-fucose. Residues 169 to 326 form a donor-binding region; that stretch reads GFLTVSTNPF…NWRKDFTVNL (158 aa). The segment at 327–359 is acceptor-binding; sequence PRFWESHACLACDHVKRHQEYKSVGNLEKWFWN.

The protein belongs to the glycosyltransferase 10 family. In terms of assembly, homodimer. Post-translationally, N-glycosylated with complex-type N-glycans. As to expression, mainly detected in brain and kidney.

The protein resides in the golgi apparatus. The protein localises to the trans-Golgi network membrane. It is found in the golgi apparatus membrane. It catalyses the reaction a beta-D-galactosyl-(1-&gt;4)-N-acetyl-beta-D-glucosaminyl derivative + GDP-beta-L-fucose = a beta-D-galactosyl-(1-&gt;4)-[alpha-L-fucosyl-(1-&gt;3)]-N-acetyl-beta-D-glucosaminyl derivative + GDP + H(+). The enzyme catalyses an alpha-Neu5Ac-(2-&gt;3)-beta-D-Gal-(1-&gt;4)-beta-D-GlcNAc-(1-&gt;3)-beta-D-Gal-(1-&gt;4)-beta-D-GlcNAc derivative + GDP-beta-L-fucose = an alpha-Neu5Ac-(2-&gt;3)-beta-D-Gal-(1-&gt;4)-beta-D-GlcNAc-(1-&gt;3)-beta-D-Gal-(1-&gt;4)-[alpha-L-Fuc-(1-&gt;3)]-beta-D-GlcNAc derivative + GDP + H(+). It carries out the reaction alpha-N-glycoloylneuraminosyl-(2-&gt;3)-beta-D-galactosyl-(1-&gt;4)-N-acetyl-beta-D-glucosaminyl-(1-&gt;3)-beta-D-galactosyl-(1-&gt;4)-N-acetyl-beta-D-glucosaminyl-(1-&gt;3)-beta-D-galactosyl-(1-&gt;4)-beta-D-glucosyl-(1&lt;-&gt;1')-ceramide + GDP-beta-L-fucose = alpha-N-glycoloylneuraminosyl-(2-&gt;3)-beta-D-galactosyl-(1-&gt;4)-N-acetyl-beta-D-glucosaminyl-(1-&gt;3)-beta-D-galactosyl-(1-&gt;4)-[alpha-L-fucosyl-(1-&gt;3)]-N-acetyl-beta-D-glucosaminyl-(1-&gt;3)-beta-D-galactosyl-(1-&gt;4)-beta-D-glucosyl-(1&lt;-&gt;1')-ceramide + GDP + H(+). The catalysed reaction is alpha-D-galactosyl-(1-&gt;3)-beta-D-galactosyl-(1-&gt;4)-N-acetyl-beta-D-glucosaminyl-(1-&gt;3)-beta-D-galactosyl-(1-&gt;4)-beta-D-glucosyl-(1&lt;-&gt;1')-ceramide + GDP-beta-L-fucose = a neolactoside IV(3)-alpha-Gal,III(3)-alpha-Fuc-nLc4Cer + GDP + H(+). It catalyses the reaction a neolactoside nLc4Cer + GDP-beta-L-fucose = a neolactoside III(3)-alpha-Fuc-nLc4Cer + GDP + H(+). The enzyme catalyses an N-acetyl-alpha-neuraminyl-(2-&gt;3)-beta-D-galactosyl-(1-&gt;4)-N-acetyl-beta-D-glucosaminyl derivative + GDP-beta-L-fucose = an alpha-Neu5Ac-(2-&gt;3)-beta-D-Gal-(1-&gt;4)-[alpha-L-Fuc-(1-&gt;3)]-beta-D-GlcNAc derivative + GDP + H(+). It carries out the reaction beta-D-Gal-(1-&gt;4)-beta-D-GlcNAc-(1-&gt;3)-beta-D-Gal-(1-&gt;4)-D-Glc + GDP-beta-L-fucose = beta-D-Gal-(1-&gt;4)-[alpha-L-Fuc-(1-&gt;3)]-beta-D-GlcNAc-(1-&gt;3)-beta-D-Gal-(1-&gt;4)-D-Glc + GDP + H(+). The catalysed reaction is an alpha-L-Fuc-(1-&gt;2)-beta-D-Gal-(1-&gt;4)-beta-D-GlcNAc derivative + GDP-beta-L-fucose = an alpha-L-Fuc-(1-&gt;2)-beta-D-Gal-(1-&gt;4)-[alpha-L-Fuc-(1-&gt;3)]-beta-D-GlcNAc derivative + GDP + H(+). It participates in protein modification; protein glycosylation. Its pathway is glycolipid biosynthesis. Activated by Mn2+. Its function is as follows. Catalyzes alpha(1-&gt;3) linkage of fucosyl moiety transferred from GDP-beta-L-fucose to N-acetyl glucosamine (GlcNAc) within type 2 lactosamine (LacNAc, beta-D-Gal-(1-&gt;4)-beta-D-GlcNAc-) glycan attached to glycolipids and N- or O-linked glycoproteins. Fucosylates distal type 2 LacNAc and its fucosylated (H-type 2 LacNAc) and sialylated (sialyl-type 2 LacNAc) derivatives to form Lewis x (Lex) (CD15) and Lewis y (Ley) antigenic epitopes involved in cell adhesion and differentiation. Generates Lex epitopes in the brain, presumably playing a role in the maintenance of neuronal stemness and neurite outgrowth in progenitor neural cells. Fucosylates the internal type 2 LacNAc unit of the polylactosamine chain to form VIM-2 antigen that serves as recognition epitope for SELE. Can also modify milk oligosaccharides in particular type 2 tetrasaccharide LNnT. The polypeptide is 4-galactosyl-N-acetylglucosaminide 3-alpha-L-fucosyltransferase 9 (Mus musculus (Mouse)).